The sequence spans 212 residues: Thymidylate kinase (212 aa).

Position 10–17 (10–17 (GPEGAGKT)) interacts with ATP.

The protein belongs to the thymidylate kinase family.

The enzyme catalyses dTMP + ATP = dTDP + ADP. In terms of biological role, phosphorylation of dTMP to form dTDP in both de novo and salvage pathways of dTTP synthesis. This Bacillus licheniformis (strain ATCC 14580 / DSM 13 / JCM 2505 / CCUG 7422 / NBRC 12200 / NCIMB 9375 / NCTC 10341 / NRRL NRS-1264 / Gibson 46) protein is Thymidylate kinase.